We begin with the raw amino-acid sequence, 414 residues long: Serine/threonine transporter SstT (414 aa).

At 2-15 the chain is on the cytoplasmic side; the sequence is TTQRSPGLFRRLAH. Residues 16-36 form a helical membrane-spanning segment; that stretch reads GSLVKQILVGLVLGILLAWIS. Over 37-45 the chain is Periplasmic; sequence KPAAEAVGL. The helical transmembrane segment at 46–66 threads the bilayer; that stretch reads LGTLFVGALKAVAPILVLMLV. The Cytoplasmic portion of the chain corresponds to 67–83; the sequence is MASIANHQHGQKTNIRP. The helical transmembrane segment at 84-104 threads the bilayer; that stretch reads ILFLYLLGTFSAALAAVVFSF. The Periplasmic segment spans residues 105–142; it reads AFPSTLHLSSSAGDISPPSGIVEVMRGLVMSMVSNPID. Residues 143-163 traverse the membrane as a helical segment; sequence ALLKGNYIGILVWAIGLGFAL. The Cytoplasmic portion of the chain corresponds to 164-179; it reads RHGNETTKNLVNDMSN. A helical transmembrane segment spans residues 180–200; that stretch reads AVTFMVKLVIRFAPIGIFGLV. Residues 201–217 lie on the Periplasmic side of the membrane; the sequence is SSTLATTGFSTLWGYAQ. Residues 218–238 form a helical membrane-spanning segment; it reads LLVVLVGCMLLVALVVNPLLV. The Cytoplasmic portion of the chain corresponds to 239–299; it reads WWKIRRNPFP…VSIPLGATIN (61 aa). The helical transmembrane segment at 300-320 threads the bilayer; sequence MAGAAITITVLTLAAVNTLGI. Topologically, residues 321 to 331 are periplasmic; it reads PVDLPTALLLS. The helical transmembrane segment at 332-352 threads the bilayer; that stretch reads VVASLCACGASGVAGGSLLLI. Over 353–414 the chain is Cytoplasmic; that stretch reads PLACNMFGIS…DRLANSALRN (62 aa).

Belongs to the dicarboxylate/amino acid:cation symporter (DAACS) (TC 2.A.23) family.

It is found in the cell inner membrane. It catalyses the reaction L-serine(in) + Na(+)(in) = L-serine(out) + Na(+)(out). The enzyme catalyses L-threonine(in) + Na(+)(in) = L-threonine(out) + Na(+)(out). Its function is as follows. Involved in the import of serine and threonine into the cell, with the concomitant import of sodium (symport system). The polypeptide is Serine/threonine transporter SstT (Shigella flexneri serotype 5b (strain 8401)).